The sequence spans 120 residues: NAD(P)H-quinone oxidoreductase subunit 3, chloroplastic (120 aa).

A run of 3 helical transmembrane segments spans residues 9–29 (IFWA…LISG), 64–84 (MFAL…PWAM), and 88–108 (VLGV…ILGL).

This sequence belongs to the complex I subunit 3 family. NDH is composed of at least 16 different subunits, 5 of which are encoded in the nucleus.

The protein resides in the plastid. Its subcellular location is the chloroplast thylakoid membrane. The enzyme catalyses a plastoquinone + NADH + (n+1) H(+)(in) = a plastoquinol + NAD(+) + n H(+)(out). It catalyses the reaction a plastoquinone + NADPH + (n+1) H(+)(in) = a plastoquinol + NADP(+) + n H(+)(out). Functionally, NDH shuttles electrons from NAD(P)H:plastoquinone, via FMN and iron-sulfur (Fe-S) centers, to quinones in the photosynthetic chain and possibly in a chloroplast respiratory chain. The immediate electron acceptor for the enzyme in this species is believed to be plastoquinone. Couples the redox reaction to proton translocation, and thus conserves the redox energy in a proton gradient. This is NAD(P)H-quinone oxidoreductase subunit 3, chloroplastic from Aethionema grandiflorum (Persian stone-cress).